We begin with the raw amino-acid sequence, 451 residues long: Macrophage scavenger receptor types I and II (451 aa).

Topologically, residues 1–50 (MEQWDHFHNQQEDTDSCSESVKFDARSMTALLPPNPKNSPSLQEKLKSFK) are cytoplasmic. Serine 27 carries the phosphoserine modification. The helical; Signal-anchor for type II membrane protein transmembrane segment at 51-76 (AALIALYLLVFAVLIPLIGIVAAQLL) threads the bilayer. A spacer region spans residues 77–109 (KWETKNCSVSSTNANDITQSLTGKGNDSEEEMR). Over 77-451 (KWETKNCSVS…SEDAGVTCTL (375 aa)) the chain is Extracellular. Residues asparagine 82, asparagine 102, asparagine 143, asparagine 184, asparagine 221, asparagine 249, and asparagine 267 are each glycosylated (N-linked (GlcNAc...) asparagine). Residues 171–255 (NAIDEISKSL…VLNNITNDLR (85 aa)) adopt a coiled-coil conformation. Positions 267-346 (NITLIQGPPG…EKGSGNTLTP (80 aa)) are disordered. The Collagen-like domain maps to 273 to 341 (GPPGPPGEKG…KGQKGEKGSG (69 aa)). In terms of domain architecture, SRCR spans 350 to 450 (VRLVGGSGPH…HSEDAGVTCT (101 aa)). 3 disulfide bridges follow: cysteine 375–cysteine 439, cysteine 388–cysteine 449, and cysteine 419–cysteine 429.

As to quaternary structure, homotrimer. Interacts with MYO18A. Isoform I, isoform II and isoform III are expressed in monocyte-derived macrophages. Isoform I and isoform II are expressed in the liver, placenta and brain.

Its subcellular location is the membrane. Its function is as follows. Membrane glycoproteins implicated in the pathologic deposition of cholesterol in arterial walls during atherogenesis. Two types of receptor subunits exist. These receptors mediate the endocytosis of a diverse group of macromolecules, including modified low density lipoproteins (LDL). Isoform III does not internalize acetylated LDL. The sequence is that of Macrophage scavenger receptor types I and II (MSR1) from Homo sapiens (Human).